The sequence spans 289 residues: Eukaryotic translation initiation factor 3 subunit F (289 aa).

In terms of domain architecture, MPN spans 7–137 (VKVHPVVLFQ…LRAYVCVPLG (131 aa)).

Belongs to the eIF-3 subunit F family. Component of the eukaryotic translation initiation factor 3 (eIF-3) complex.

It is found in the cytoplasm. Its function is as follows. Component of the eukaryotic translation initiation factor 3 (eIF-3) complex, which is involved in protein synthesis of a specialized repertoire of mRNAs and, together with other initiation factors, stimulates binding of mRNA and methionyl-tRNAi to the 40S ribosome. The eIF-3 complex specifically targets and initiates translation of a subset of mRNAs involved in cell proliferation. In Bombyx mori (Silk moth), this protein is Eukaryotic translation initiation factor 3 subunit F.